Reading from the N-terminus, the 769-residue chain is Serine protease HtrA-like (769 aa).

Over residues 1-20 the composition is skewed to basic residues; sequence MDIGKKHVIPKSQYRRKRRE. The segment at 1 to 390 is disordered; it reads MDIGKKHVIP…ATSKLNKGRA (390 aa). 2 stretches are compositionally biased toward basic and acidic residues: residues 21–64 and 71–108; these read FFHN…ERFK and LEQRNRDVNENKAEESKSNQDSKSAYNRDHYLTDDVSK. Positions 126–137 are enriched in polar residues; the sequence is YEQNSEATLSTK. The span at 138 to 186 shows a compositional bias: basic and acidic residues; it reads STDKVESTEMRKLSSDKNKVGHEEQHVLSKPSEHDKETRIDSESSRTDS. Over residues 247-262 the composition is skewed to polar residues; the sequence is QQSQNEQTKTYTYGDS. Basic and acidic residues-rich tracts occupy residues 264–296 and 310–330; these read QNDKSNHENDLSHHIPSISDDKDNVMRENHIVD and KTDDDRKLDEKIHVEDKHKQN. Over residues 331–347 the composition is skewed to polar residues; the sequence is ADSSETVGYQSQSTASH. Positions 348-364 are enriched in basic and acidic residues; it reads RSTEKRNISINDHDKLN. Positions 365 to 390 are enriched in polar residues; it reads GQKTNTKTSANNNQKKATSKLNKGRA. A helical membrane pass occupies residues 410 to 430; sequence LVILMGIIILIVILNAIFNNV. Catalysis depends on charge relay system residues His504, Asp534, and Ser619. The 54-residue stretch at 680-733 folds into the PDZ domain; it reads IVSLNSFERQAVKLPGKVKNGVVVDQVDNNGLADQSGLKKGDVITELDGKLLED.

Belongs to the peptidase S1C family.

The protein resides in the cell membrane. This Staphylococcus aureus (strain NCTC 8325 / PS 47) protein is Serine protease HtrA-like.